We begin with the raw amino-acid sequence, 554 residues long: Cytochrome c oxidase subunit 1-alpha (554 aa).

The chain crosses the membrane as a helical span at residues 26–56; the sequence is KDIGVLYLFTAGLAGLISVTLTVYMRMELQH. Cys-63 and Cys-77 are oxidised to a cystine. 6 consecutive transmembrane segments (helical) span residues 81–118, 127–148, 175–203, 215–248, 260–295, and 301–319; these read AHLWNVVVTYHGILMMFFVVIPALFGGFGNYFMPLHIG, LNNLSYWLYVCGVSLAIASLLS, AMDLAIFAVHVSGATSILGAINIITTFLN, PLFAWAVFITAWMILLSLPVLAGGITMLLMDRNF, DPVLYQHILWFFGHPEVYMLILPGFGIISHVISTFA, and GYLPMVLAMAAIAFLGFIV. Residue His-91 coordinates Fe(II)-heme a. The Cu cation site is built by His-273 and Tyr-277. Positions 273-277 form a cross-link, 1'-histidyl-3'-tyrosine (His-Tyr); sequence HPEVY. Cu cation-binding residues include His-322 and His-323. A run of 5 helical transmembrane segments spans residues 331–359, 367–390, 399–425, 436–463, and 478–508; these read LTQQTYFQMATMTIAVPTGIKVFSWIATM, KTPMLWALAFLFTVGGVTGVVIAQ, DTYYIVAHFHYVMSLGALFAIFAGTYY, PEWAGQLHFWMMFIGSNLIFFPQHFLGR, and SYWNNISSIGAYISFASFLFFIGIVFYTLFA. A heme a3-binding site is contributed by His-406. His-408 is a Fe(II)-heme a binding site.

It belongs to the heme-copper respiratory oxidase family. Cu(2+) serves as cofactor. It depends on heme as a cofactor.

It localises to the cell inner membrane. It catalyses the reaction 4 Fe(II)-[cytochrome c] + O2 + 8 H(+)(in) = 4 Fe(III)-[cytochrome c] + 2 H2O + 4 H(+)(out). The protein operates within energy metabolism; oxidative phosphorylation. Subunit I and II form the functional core of the enzyme complex. Electrons originating in cytochrome c are transferred via heme a and Cu(A) to the binuclear center formed by heme a3 and Cu(B). This cytochrome c oxidase shows proton pump activity across the membrane in addition to the electron transfer. The polypeptide is Cytochrome c oxidase subunit 1-alpha (ctaDI) (Paracoccus denitrificans).